The chain runs to 503 residues: Probable folate-biopterin transporter 6 (503 aa).

12 helical membrane-spanning segments follow: residues Ser56–Phe76, Leu101–Ile121, Pro128–Gly148, Ala153–Ile173, Leu194–Val214, Gly221–Tyr241, Leu281–Tyr301, Phe314–His334, Asn344–Ile364, Leu369–Ile389, Leu404–Gly424, and Trp450–Val470.

The protein belongs to the major facilitator superfamily. Folate-biopterin transporter (TC 2.A.71) family.

It is found in the membrane. Functionally, could mediate folate transport. This is Probable folate-biopterin transporter 6 from Arabidopsis thaliana (Mouse-ear cress).